A 225-amino-acid chain; its full sequence is N-(5'-phosphoribosyl)anthranilate isomerase (225 aa).

It belongs to the TrpF family.

The enzyme catalyses N-(5-phospho-beta-D-ribosyl)anthranilate = 1-(2-carboxyphenylamino)-1-deoxy-D-ribulose 5-phosphate. Its pathway is amino-acid biosynthesis; L-tryptophan biosynthesis; L-tryptophan from chorismate: step 3/5. The polypeptide is N-(5'-phosphoribosyl)anthranilate isomerase (Nitrobacter hamburgensis (strain DSM 10229 / NCIMB 13809 / X14)).